The primary structure comprises 419 residues: UDP-N-acetylglucosamine 1-carboxyvinyltransferase (419 aa).

A phosphoenolpyruvate-binding site is contributed by 22–23 (KN). Arginine 93 lines the UDP-N-acetyl-alpha-D-glucosamine pocket. Cysteine 117 (proton donor) is an active-site residue. At cysteine 117 the chain carries 2-(S-cysteinyl)pyruvic acid O-phosphothioketal. UDP-N-acetyl-alpha-D-glucosamine-binding residues include aspartate 307 and isoleucine 329.

This sequence belongs to the EPSP synthase family. MurA subfamily.

Its subcellular location is the cytoplasm. The catalysed reaction is phosphoenolpyruvate + UDP-N-acetyl-alpha-D-glucosamine = UDP-N-acetyl-3-O-(1-carboxyvinyl)-alpha-D-glucosamine + phosphate. It participates in cell wall biogenesis; peptidoglycan biosynthesis. Functionally, cell wall formation. Adds enolpyruvyl to UDP-N-acetylglucosamine. The polypeptide is UDP-N-acetylglucosamine 1-carboxyvinyltransferase (Shewanella sediminis (strain HAW-EB3)).